A 1189-amino-acid chain; its full sequence is Origin recognition complex subunit 1 (1189 aa).

The required for peripherial nuclear localization stretch occupies residues Met-1–Lys-53. Thr-2 is modified (phosphothreonine). A Phosphoserine modification is found at Ser-20. 4 Leucine heptad repeat repeats span residues Leu-137 to Ser-143, Leu-144 to Ser-150, Leu-151 to Ser-157, and Leu-158 to Glu-164. Positions Lys-239–His-248 are enriched in basic residues. 2 disordered regions span residues Lys-239–Asp-421 and Asp-679–Leu-749. The span at Gln-254–Thr-279 shows a compositional bias: basic and acidic residues. Low complexity predominate over residues Asn-304–Asn-320. Residues Thr-321–His-339 are compositionally biased toward polar residues. The span at His-353 to Asn-381 shows a compositional bias: low complexity. A compositionally biased stretch (basic and acidic residues) spans Asn-385–His-394. Residues Thr-395–Thr-411 show a composition bias toward low complexity. The span at Lys-695–Lys-709 shows a compositional bias: polar residues. Basic and acidic residues-rich tracts occupy residues Thr-710–Glu-724 and Asp-733–Asn-742. ATP-binding positions include Val-780 and Gly-815–Ala-823. Positions 903 and 904 each coordinate Mg(2+). Glu-904 is an ATP binding site. A PIP-box motif is present at residues Gln-913 to Trp-922. 2 residues coordinate ATP: Asn-937 and Arg-1003.

This sequence belongs to the ORC1 family. In terms of assembly, component of the origin recognition complex (ORC). Interacts (via PIP-box) with PCNA1; the interaction occurs during DNA replication in trophozoites. Post-translationally, in schizonts, may be phosphorylated by PK5; phosphorylation leads to ORC1 dissociation from the telomeres and var gene promoters, translocation to the cytoplasm, where it is degraded by the proteasome.

Its subcellular location is the nucleus. It is found in the chromosome. The protein localises to the telomere. It localises to the nucleolus. It carries out the reaction ATP + H2O = ADP + phosphate + H(+). In terms of biological role, component of the origin recognition complex (ORC) that binds origins of replication and thus may regulate the initiation of DNA replication. DNA-binding may not be ATP-dependent. In a SIR2A/Sir2-dependent manner, binds to and silences telomers and subtelomeric repeat regions (TAREs). In a SIR2A/Sir2-dependent manner, binds to promoters of var genes localized next to TAREs resulting in their silencing. The polypeptide is Origin recognition complex subunit 1 (Plasmodium falciparum (isolate 3D7)).